The sequence spans 111 residues: Photosystem II reaction center Psb28 protein (111 aa).

The protein belongs to the Psb28 family. Part of the photosystem II complex.

The protein localises to the cellular thylakoid membrane. This is Photosystem II reaction center Psb28 protein from Trichormus variabilis (strain ATCC 29413 / PCC 7937) (Anabaena variabilis).